A 216-amino-acid polypeptide reads, in one-letter code: GTP:AMP phosphotransferase, mitochondrial (216 aa).

A GTP-binding site is contributed by 15 to 20 (GSGKGT). Residues 35 to 64 (STGDILRQNIIKNTELGKKAKQYIAEGKLV) form an NMPbind region. Residues Thr-36, Arg-41, 62 to 64 (KLV), 89 to 92 (GFPR), and Gln-96 each bind AMP. Residues 125–162 (NRWIHAPSGRVYNIGFKNPKVPGKDDVTGEPLMQREDD) form an LID region. GTP is bound by residues Arg-126 and 135 to 136 (VY). AMP contacts are provided by Arg-159 and Arg-170. Residue Thr-199 coordinates GTP.

It belongs to the adenylate kinase family. AK3 subfamily. Monomer. In terms of tissue distribution, ubiquitously expressed with highest levels expressed in the abdomen, suggesting a function in muscle tissues.

The protein resides in the mitochondrion matrix. It catalyses the reaction a ribonucleoside 5'-triphosphate + AMP = a ribonucleoside 5'-diphosphate + ADP. Functionally, involved in maintaining the homeostasis of cellular nucleotides by catalyzing the interconversion of nucleoside phosphates. Has GTP:AMP phosphotransferase and ITP:AMP phosphotransferase activities. This chain is GTP:AMP phosphotransferase, mitochondrial, found in Drosophila melanogaster (Fruit fly).